The primary structure comprises 198 residues: Pyridoxal 5'-phosphate synthase subunit PdxT (198 aa).

52–54 (GES) lines the L-glutamine pocket. Cys84 functions as the Nucleophile in the catalytic mechanism. L-glutamine contacts are provided by residues Arg115 and 143-144 (IR). Active-site charge relay system residues include His179 and Glu181.

It belongs to the glutaminase PdxT/SNO family. In the presence of PdxS, forms a dodecamer of heterodimers. Only shows activity in the heterodimer.

The enzyme catalyses aldehydo-D-ribose 5-phosphate + D-glyceraldehyde 3-phosphate + L-glutamine = pyridoxal 5'-phosphate + L-glutamate + phosphate + 3 H2O + H(+). The catalysed reaction is L-glutamine + H2O = L-glutamate + NH4(+). Its pathway is cofactor biosynthesis; pyridoxal 5'-phosphate biosynthesis. Functionally, catalyzes the hydrolysis of glutamine to glutamate and ammonia as part of the biosynthesis of pyridoxal 5'-phosphate. The resulting ammonia molecule is channeled to the active site of PdxS. In Methanococcoides burtonii (strain DSM 6242 / NBRC 107633 / OCM 468 / ACE-M), this protein is Pyridoxal 5'-phosphate synthase subunit PdxT.